A 239-amino-acid chain; its full sequence is Bidirectional sugar transporter SWEET8 (239 aa).

Topologically, residues 1–6 (MVDAKQ) are extracellular. A helical transmembrane segment spans residues 7-27 (VRFIIGVIGNVISFGLFAAPA). Residues 9 to 98 (FIIGVIGNVI…VYLMYCGHKK (90 aa)) form the MtN3/slv 1 domain. Residues 28 to 44 (KTFWRIFKKKSVEEFSY) lie on the Cytoplasmic side of the membrane. The chain crosses the membrane as a helical span at residues 45 to 65 (VPYVATVMNCMLWVFYGLPVV). Topologically, residues 66 to 69 (HKDS) are extracellular. Residues 70–90 (ILVSTINGVGLVIELFYVGVY) traverse the membrane as a helical segment. Over 91-103 (LMYCGHKKNHRRN) the chain is Cytoplasmic. Residues 104-124 (ILGFLALEVILVVAIILITLF) traverse the membrane as a helical segment. Topologically, residues 125–135 (ALKGDFVKQTF) are extracellular. The 52-residue stretch at 134–185 (TFVGVICDVFNIAMYGAPSLAIIKVVKTKSVEYMPFLLSLVCFVNAGIWTTY) folds into the MtN3/slv 2 domain. The helical transmembrane segment at 136–156 (VGVICDVFNIAMYGAPSLAII) threads the bilayer. At 157-168 (KVVKTKSVEYMP) the chain is on the cytoplasmic side. A helical transmembrane segment spans residues 169 to 189 (FLLSLVCFVNAGIWTTYSLIF). Topologically, residues 190–194 (KIDYY) are extracellular. Residues 195 to 215 (VLASNGIGTFLALSQLIVYFM) form a helical membrane-spanning segment. Residues 216–239 (YYKSTPKEKTVKPSEVEISATERV) are Cytoplasmic-facing.

Belongs to the SWEET sugar transporter family. In terms of assembly, forms homooligomers and heterooligomers with SWEET4, SWEET5, SWEET6, SWEET7, SWEET9, SWEET10, SWEET11, SWEET13, SWEET15, SWEET16 and SWEET17. In terms of tissue distribution, expressed in inflorescences, embryo sacs and pollen, and at a lower level in stems. Barely detected in roots, leaves and seedlings.

The protein localises to the cell membrane. Its function is as follows. Mediates both low-affinity uptake and efflux of sugar across the plasma membrane. Required, in pollen, for microspore cell integrity and primexine pattern formation. The sequence is that of Bidirectional sugar transporter SWEET8 from Arabidopsis thaliana (Mouse-ear cress).